Reading from the N-terminus, the 376-residue chain is Alcohol dehydrogenase 1 (376 aa).

Ser-2 carries the N-acetylserine modification. Zn(2+) is bound by residues Cys-47, His-68, Cys-98, Cys-101, Cys-104, Cys-112, and Cys-176. NAD(+) is bound by residues 201–206 (GLGGVG), Asp-225, Lys-230, 294–296 (VGV), and Arg-371.

This sequence belongs to the zinc-containing alcohol dehydrogenase family. Class-I subfamily. In terms of assembly, homodimer. Requires Zn(2+) as cofactor.

It is found in the cytoplasm. It catalyses the reaction a primary alcohol + NAD(+) = an aldehyde + NADH + H(+). The enzyme catalyses a secondary alcohol + NAD(+) = a ketone + NADH + H(+). This chain is Alcohol dehydrogenase 1 (ADH1), found in Gallus gallus (Chicken).